We begin with the raw amino-acid sequence, 177 residues long: Large ribosomal subunit protein bL31m (177 aa).

The N-terminal 14 residues, 1–14, are a transit peptide targeting the mitochondrion; it reads MLKSIFAKRFASTG. A sufficient for general mitochondrial translation region spans residues 36 to 118; it reads KSRPAIYHQF…FSVDSTTPNS (83 aa). Residues 87 to 177 are sufficient for dosage suppression of COX2 mutation; the sequence is LVVVDANSGG…KLASKKRDKK (91 aa). Over residues 111-123 the composition is skewed to polar residues; sequence VDSTTPNSSSETV. Residues 111-144 form a disordered region; it reads VDSTTPNSSSETVELSEENKKKTQIKKEEKEDVS. Over residues 127–144 the composition is skewed to basic and acidic residues; it reads EENKKKTQIKKEEKEDVS.

Belongs to the bacterial ribosomal protein bL31 family. Highly divergent. Component of the mitochondrial large ribosomal subunit (mt-LSU). Mature yeast 74S mitochondrial ribosomes consist of a small (37S) and a large (54S) subunit. The 37S small subunit contains a 15S ribosomal RNA (15S mt-rRNA) and 34 different proteins. The 54S large subunit contains a 21S rRNA (21S mt-rRNA) and 46 different proteins.

It localises to the mitochondrion. Functionally, component of the mitochondrial ribosome (mitoribosome), a dedicated translation machinery responsible for the synthesis of mitochondrial genome-encoded proteins, including at least some of the essential transmembrane subunits of the mitochondrial respiratory chain. The mitoribosomes are attached to the mitochondrial inner membrane and translation products are cotranslationally integrated into the membrane. Overexpression of bL31m suppresses mutations in the COX2 leader peptide-encoding and initiation codon regions. The sequence is that of Large ribosomal subunit protein bL31m (MRPL36) from Saccharomyces cerevisiae (strain ATCC 204508 / S288c) (Baker's yeast).